Consider the following 264-residue polypeptide: Zearalenone hydrolase (264 aa).

Residues 27-207 (VLVPDGLGEC…KDLEALRGKP (181 aa)) enclose the AB hydrolase-1 domain. Zearalenone contacts are provided by G32, S102, and S103. Residue S102 is part of the active site. E126 is a catalytic residue. Residues W183, Y187, S220, and H242 each contribute to the zearalenone site. H242 is an active-site residue.

It belongs to the AB hydrolase superfamily. Hydrolase RutD family. In terms of assembly, homodimer.

It catalyses the reaction zearalenone + H2O = hydrolyzed zearalenone + H(+). Functionally, lactonohydrolase that specifically hydrolyzes and deactivates the mycotoxin zearalenone (ZEN) and its zearalenol (ZOL) derivatives. ZHD101 prefers ZEN to ZOL as its substrate, but ZOL, especially the alpha-form, shows higher estrogenic toxicity than ZEN. The sequence is that of Zearalenone hydrolase from Bionectria ochroleuca (Gliocladium roseum).